The sequence spans 111 residues: Nucleoid-associated protein Clim_0875 (111 aa).

Belongs to the YbaB/EbfC family. In terms of assembly, homodimer.

It localises to the cytoplasm. It is found in the nucleoid. In terms of biological role, binds to DNA and alters its conformation. May be involved in regulation of gene expression, nucleoid organization and DNA protection. This Chlorobium limicola (strain DSM 245 / NBRC 103803 / 6330) protein is Nucleoid-associated protein Clim_0875.